We begin with the raw amino-acid sequence, 152 residues long: 6,7-dimethyl-8-ribityllumazine synthase (152 aa).

5-amino-6-(D-ribitylamino)uracil is bound by residues phenylalanine 22, 56–58, and 79–81; these read AFE and AVI. (2S)-2-hydroxy-3-oxobutyl phosphate is bound at residue 84–85; it reads AT. Catalysis depends on histidine 87, which acts as the Proton donor. Phenylalanine 112 provides a ligand contact to 5-amino-6-(D-ribitylamino)uracil. Arginine 126 lines the (2S)-2-hydroxy-3-oxobutyl phosphate pocket.

Belongs to the DMRL synthase family.

It carries out the reaction (2S)-2-hydroxy-3-oxobutyl phosphate + 5-amino-6-(D-ribitylamino)uracil = 6,7-dimethyl-8-(1-D-ribityl)lumazine + phosphate + 2 H2O + H(+). Its pathway is cofactor biosynthesis; riboflavin biosynthesis; riboflavin from 2-hydroxy-3-oxobutyl phosphate and 5-amino-6-(D-ribitylamino)uracil: step 1/2. In terms of biological role, catalyzes the formation of 6,7-dimethyl-8-ribityllumazine by condensation of 5-amino-6-(D-ribitylamino)uracil with 3,4-dihydroxy-2-butanone 4-phosphate. This is the penultimate step in the biosynthesis of riboflavin. In Carboxydothermus hydrogenoformans (strain ATCC BAA-161 / DSM 6008 / Z-2901), this protein is 6,7-dimethyl-8-ribityllumazine synthase.